The sequence spans 145 residues: uncharacterized protein (145 aa).

The chain crosses the membrane as a helical span at residues 16–36 (VLAYLLQLSASLVLPVAIWLI).

The protein localises to the mitochondrion membrane. This is an uncharacterized protein from Arabidopsis thaliana (Mouse-ear cress).